The primary structure comprises 265 residues: Thioredoxin-related transmembrane protein 2 homolog (265 aa).

Residues 1 to 32 (MLIPRLDEVRRALTAFHFFNTLLALAFPVIRS) form the signal peptide. Residues 33–96 (TSLCDYVFAV…KIAGMFLFIR (64 aa)) are Extracellular-facing. A helical membrane pass occupies residues 97 to 117 (ADILPGIIYILACLIVTVLFP). Residues 118 to 265 (EPVYNGPEQV…KKGAKAKKED (148 aa)) are Cytoplasmic-facing. One can recognise a Thioredoxin domain in the interval 126 to 230 (QVTYFQGEQL…RPLVNDSRRA (105 aa)). A Di-lysine motif motif is present at residues 262 to 265 (KKED).

Its subcellular location is the membrane. The protein is Thioredoxin-related transmembrane protein 2 homolog of Caenorhabditis elegans.